The following is a 418-amino-acid chain: MYTYMEYLQKCFFHATRWNEDNIYSNITASSHALLEFLVPSGLKMDVSSRSSPNSASSFTLSNHHSLNGSLAYMYSSTQLKGTPGTRRIPLQDAIAGFKIVEPNEMRPSASGTIAPSSLLYGRMYFPGAALEAMVIRRFSPHTQLLIKCIHNPQLDKNGTLIAYFQKNTQRYSREVIYSTNDALVGFRGLYNIGSTPSWSPSPPNFDRSVVSVGAELWYAARTMSPGLSTGLRYSTRSTSTGKPLTMTLACNPILGHISSTYTVKTSVASTFCSRYDFNLFSYASNLSLGFELFNFDKNAAVERNPQLPTPTTNPSASKQNLINPIRDHSYYQTTPSTNATTYQSSQTISDSFQKLVNRSEFSSVVKVSTSLNDRLVRLLWEGRFKDFLVSSGVKVSLNPATNAVELNRFGISFSYAS.

This sequence belongs to the MDM10 family. As to quaternary structure, component of the ER-mitochondria encounter structure (ERMES) or MDM complex, composed of MMM1, MDM10, MDM12 and MDM34. Associates with the mitochondrial outer membrane sorting assembly machinery SAM(core) complex.

The protein localises to the mitochondrion outer membrane. Its function is as follows. Component of the ERMES/MDM complex, which serves as a molecular tether to connect the endoplasmic reticulum and mitochondria. Components of this complex are involved in the control of mitochondrial shape and protein biogenesis and may function in phospholipid exchange. MDM10 is involved in the late assembly steps of the general translocase of the mitochondrial outer membrane (TOM complex). Functions in the TOM40-specific route of the assembly of outer membrane beta-barrel proteins, including the association of TOM40 with the receptor TOM22 and small TOM proteins. Can associate with the SAM(core) complex as well as the MDM12-MMM1 complex, both involved in late steps of the major beta-barrel assembly pathway, that is responsible for biogenesis of all outer membrane beta-barrel proteins. May act as a switch that shuttles between both complexes and channels precursor proteins into the TOM40-specific pathway. Plays a role in mitochondrial morphology and in the inheritance of mitochondria. This chain is Mitochondrial distribution and morphology protein 10, found in Meyerozyma guilliermondii (strain ATCC 6260 / CBS 566 / DSM 6381 / JCM 1539 / NBRC 10279 / NRRL Y-324) (Yeast).